The chain runs to 520 residues: L-cysteine:1D-myo-inositol 2-amino-2-deoxy-alpha-D-glucopyranoside ligase (520 aa).

Cys48 contributes to the Zn(2+) binding site. Residues 48-51 (CGIT), Thr63, and 86-88 (NVT) each bind L-cysteinyl-5'-AMP. Positions 50–60 (ITPYDSTHLGH) match the 'HIGH' region motif. Positions 192–197 (ERGGDP) match the 'ERGGDP' region motif. Residue Trp232 coordinates L-cysteinyl-5'-AMP. A Zn(2+)-binding site is contributed by Cys236. 254–256 (GED) is a binding site for L-cysteinyl-5'-AMP. His261 is a Zn(2+) binding site. Ile288 serves as a coordination point for L-cysteinyl-5'-AMP. The 'KMSKS' region motif lies at 294–298 (KMSKS).

It belongs to the class-I aminoacyl-tRNA synthetase family. MshC subfamily. Monomer. Requires Zn(2+) as cofactor.

The catalysed reaction is 1D-myo-inositol 2-amino-2-deoxy-alpha-D-glucopyranoside + L-cysteine + ATP = 1D-myo-inositol 2-(L-cysteinylamino)-2-deoxy-alpha-D-glucopyranoside + AMP + diphosphate + H(+). Its function is as follows. Catalyzes the ATP-dependent condensation of GlcN-Ins and L-cysteine to form L-Cys-GlcN-Ins. This is L-cysteine:1D-myo-inositol 2-amino-2-deoxy-alpha-D-glucopyranoside ligase from Corynebacterium kroppenstedtii (strain DSM 44385 / JCM 11950 / CIP 105744 / CCUG 35717).